The sequence spans 508 residues: uncharacterized protein (508 aa).

12 helical membrane-spanning segments follow: residues 65-87 (IFPV…SYAV), 104-124 (WSGT…SLLL), 136-156 (FLVI…PGFI), 160-180 (VLLG…TAQW), 192-212 (VWVA…YGLA), 224-244 (LIFI…LAVV), 292-312 (TWIM…IGTF), 333-353 (LPAG…SLFI), 357-377 (MVLA…LSFA), 384-404 (LAGY…FAII), 416-436 (TVGV…PQTF), and 450-470 (TMVG…YVNW).

The protein belongs to the major facilitator superfamily. Allantoate permease family.

The protein resides in the endoplasmic reticulum. The protein localises to the golgi apparatus. It is found in the membrane. This is an uncharacterized protein from Schizosaccharomyces pombe (strain 972 / ATCC 24843) (Fission yeast).